The chain runs to 117 residues: Large ribosomal subunit protein uL18 (117 aa).

This sequence belongs to the universal ribosomal protein uL18 family. In terms of assembly, part of the 50S ribosomal subunit; part of the 5S rRNA/L5/L18/L25 subcomplex. Contacts the 5S and 23S rRNAs.

This is one of the proteins that bind and probably mediate the attachment of the 5S RNA into the large ribosomal subunit, where it forms part of the central protuberance. This is Large ribosomal subunit protein uL18 from Coxiella burnetii (strain CbuK_Q154) (Coxiella burnetii (strain Q154)).